The sequence spans 2198 residues: Activating signal cointegrator 1 complex subunit 3 (2198 aa).

Residue Ser-12 is modified to Phosphoserine. 2 coiled-coil regions span residues 18-81 and 328-356; these read KQDN…KQIV and IQSEQEKQLMKQYRREEKRIARREKKAGE. A Helicase ATP-binding 1 domain is found at 487–670; sequence ETAYNTNENM…FLHVNPYIGL (184 aa). 500–507 is an ATP binding site; the sequence is APTGAGKT. At Lys-573 the chain carries N6-acetyllysine. The DEVH box motif lies at 612–615; sequence DEVH. The 219-residue stretch at 697–915 folds into the Helicase C-terminal 1 domain; sequence QLNNMDEVCY…GTVTNVEEAV (219 aa). Residues 979 to 1288 enclose the SEC63 1 domain; sequence STDLGRTASH…GAEAVCIINF (310 aa). Positions 1337–1512 constitute a Helicase ATP-binding 2 domain; sequence HTLYHTDCNV…WLNIKQMGLF (176 aa). Residue 1350–1357 participates in ATP binding; that stretch reads APTGSGKT. The DEIH box motif lies at 1454 to 1457; the sequence is DEIH. The Helicase C-terminal 2 domain occupies 1545–1740; sequence PAFQAIRSHS…VLSDHLNAEI (196 aa). Residues 1813–2177 enclose the SEC63 2 domain; that stretch reads PLTCGRIASY…LGLDQQYDIY (365 aa).

Belongs to the helicase family. As to quaternary structure, identified in the ASCC complex that contains ASCC1, ASCC2 and ASCC3. Functions as a scaffolding subunit that interacts directly with both ASCC1 and ASCC2. Interacts directly with ALKBH3, and thereby recruits ALKBH3 to the ASCC complex. Part of the ASC-1/TRIP4 complex, that contains TRIP4, ASCC1, ASCC2 and ASCC3. Part of the RQT (ribosome quality control trigger) complex, that contains ASCC2, ASCC3 and TRIP4. Associates with ribosomes; recruited to collided ribosomes. Interacts with ZCCHC4. Interacts with ZNF598. Interacts with RPS3.

It is found in the nucleus. The protein localises to the nucleus speckle. Its subcellular location is the cytoplasm. It localises to the cytosol. The enzyme catalyses Couples ATP hydrolysis with the unwinding of duplex DNA by translocating in the 3'-5' direction.. It catalyses the reaction ATP + H2O = ADP + phosphate + H(+). ATPase involved both in DNA repair and rescue of stalled ribosomes. 3'-5' DNA helicase involved in repair of alkylated DNA: promotes DNA unwinding to generate single-stranded substrate needed for ALKBH3, enabling ALKBH3 to process alkylated N3-methylcytosine (3mC) within double-stranded regions. Also involved in activation of the ribosome quality control (RQC) pathway, a pathway that degrades nascent peptide chains during problematic translation. Drives the splitting of stalled ribosomes that are ubiquitinated in a ZNF598-dependent manner, as part of the ribosome quality control trigger (RQT) complex. Part of the ASC-1 complex that enhances NF-kappa-B, SRF and AP1 transactivation. The protein is Activating signal cointegrator 1 complex subunit 3 (Ascc3) of Mus musculus (Mouse).